We begin with the raw amino-acid sequence, 348 residues long: Histidinol-phosphate aminotransferase (348 aa).

At Lys-210 the chain carries N6-(pyridoxal phosphate)lysine.

Belongs to the class-II pyridoxal-phosphate-dependent aminotransferase family. Histidinol-phosphate aminotransferase subfamily. Homodimer. It depends on pyridoxal 5'-phosphate as a cofactor.

The catalysed reaction is L-histidinol phosphate + 2-oxoglutarate = 3-(imidazol-4-yl)-2-oxopropyl phosphate + L-glutamate. It participates in amino-acid biosynthesis; L-histidine biosynthesis; L-histidine from 5-phospho-alpha-D-ribose 1-diphosphate: step 7/9. The polypeptide is Histidinol-phosphate aminotransferase (Pseudomonas putida (strain ATCC 700007 / DSM 6899 / JCM 31910 / BCRC 17059 / LMG 24140 / F1)).